We begin with the raw amino-acid sequence, 339 residues long: MKMNEKVILHDMSLRDGMHAKQHQISINQMISAATAMDEAGIPLIEVTHGDGLGGASLNYGFPAHSDEEYLSAVIPKMKQAKVSALLLPGIGTVDHLNMAKDLGVSTIRVATHCTEADISQQHIDHASKLGLDTVGFLMMAHMASVDKIVEQAKLMVSYGANCVYCTDSAGYMLPDEVSLKISALRDTLPSSIDIGFHGHHNLALGVANSVAAIQSGARRIDGSVAGLGAGAGNTPLEVLVAVMNRMEIQSGIDLYKIMDIAEDIIVPMMDQPIRVDRDSLTLGYAGVYSSFLLFAKRAEAKYGISARDVLVELGKRGTVGGQEDMIEDLALSMSKLCK.

The Pyruvate carboxyltransferase domain occupies 7–259 (VILHDMSLRD…QSGIDLYKIM (253 aa)). Substrate is bound at residue 15 to 16 (RD). Asp16 is a binding site for Mn(2+). Catalysis depends on His19, which acts as the Proton acceptor. Substrate is bound by residues Ser169 and His198. His198 and His200 together coordinate Mn(2+). Tyr289 provides a ligand contact to substrate.

Belongs to the 4-hydroxy-2-oxovalerate aldolase family.

It carries out the reaction (S)-4-hydroxy-2-oxopentanoate = acetaldehyde + pyruvate. This Marinomonas sp. (strain MWYL1) protein is 4-hydroxy-2-oxovalerate aldolase.